The following is a 428-amino-acid chain: Cholesterol 7-desaturase (428 aa).

Residues I6 to L26 traverse the membrane as a helical segment. Positions W81–L187 constitute a Rieske domain. [2Fe-2S] cluster contacts are provided by C122, H124, C143, and H146.

This sequence belongs to the cholesterol 7-desaturase family. The cofactor is [2Fe-2S] cluster. As to expression, expressed in intestine at all postembryonic stages, including dauer. Expression is reduced in daf-2 mutants.

The protein localises to the membrane. The enzyme catalyses cholesterol + NADPH + O2 + H(+) = 7-dehydrocholesterol + NADP(+) + 2 H2O. The catalysed reaction is cholesterol + NADH + O2 + H(+) = 7-dehydrocholesterol + NAD(+) + 2 H2O. It participates in steroid hormone biosynthesis; dafachronic acid biosynthesis. Its function is as follows. Catalyzes the production of 7-dehydrocholesterol (7-DHC or cholesta-5,7-dien-3beta-ol) by inserting a double bond (desaturating) at the C7-C8 single bond of cholesterol. This reaction is the first step in the synthesis of the steroid hormone Delta(7)-dafachronic acid (one of the principal steroid hormones in nematodes). Dafachronic acids bind directly to the nuclear hormone receptor (NHR) daf-12, suppressing dauer formation and inducing reproductive growth. This Caenorhabditis elegans protein is Cholesterol 7-desaturase (daf-36).